Consider the following 255-residue polypeptide: Alkaline ceramidase (255 aa).

Topologically, residues 1 to 28 (MADGISSFWGPVTSTIECCEMNYAYSSY) are lumenal. Residues 29–49 (IAEFYNTISNVPGILLALIGL) form a helical membrane-spanning segment. At 50 to 60 (VNALRQRFEKR) the chain is on the cytoplasmic side. A helical membrane pass occupies residues 61–81 (FSILHISNMILAIGSMLYHAT). H79 contacts Zn(2+). Over 82–91 (LQHVQQQSDE) the chain is Lumenal. The helical transmembrane segment at 92 to 112 (TPMVWEILLYMYILYSPDWHY) threads the bilayer. The Cytoplasmic segment spans residues 113–118 (RSTMPT). The next 2 membrane-spanning stretches (helical) occupy residues 119 to 139 (FLFL…FGIG) and 140 to 160 (FKVH…KYYI). The Cytoplasmic portion of the chain corresponds to 161–169 (HTEDTAAKR). The chain crosses the membrane as a helical span at residues 170 to 192 (IAKWYVATILVGSICWFCDRVFC). Residues 193–205 (KTISQWPVNPQGH) are Lumenal-facing. Residues H205 and H209 each contribute to the Zn(2+) site. A helical membrane pass occupies residues 206–226 (ALWHVFMSFNSYCANTFLMFC). The Cytoplasmic segment spans residues 227-255 (RAQQRGWNPKVKYFLGVLPYVKIEKPKTQ).

This sequence belongs to the alkaline ceramidase family. The cofactor is Zn(2+). In terms of tissue distribution, mostly expressed in roots, shoot meristems and pollen, and, to a lower extent, in mature leaves.

The protein localises to the endoplasmic reticulum membrane. It localises to the golgi apparatus membrane. Functionally, hydrolyzes only phytoceramide into phytosphingosine and free fatty acid. Does not have reverse activity. Affects plant morphogenesis. Required for the formation of wax layer that ensure cuticle permeability. Implicated in abscisic acid (ABA)-mediated stomatal closure. Involved in both biotic and abiotic stresses. Promotes salt resistance and defenses responses toward pathogenic bacteria (e.g. P.syringae) and against the fungal toxin fumonisin B1 (FB1). This is Alkaline ceramidase from Arabidopsis thaliana (Mouse-ear cress).